Here is a 279-residue protein sequence, read N- to C-terminus: Diaminopimelate epimerase (279 aa).

Residues asparagine 13 and asparagine 66 each coordinate substrate. The Proton donor role is filled by cysteine 75. Residues 76-77, asparagine 164, asparagine 197, and 215-216 each bind substrate; these read GN and ER. Residue cysteine 224 is the Proton acceptor of the active site. 225 to 226 serves as a coordination point for substrate; the sequence is GT.

This sequence belongs to the diaminopimelate epimerase family. Homodimer.

It is found in the cytoplasm. It catalyses the reaction (2S,6S)-2,6-diaminopimelate = meso-2,6-diaminopimelate. Its pathway is amino-acid biosynthesis; L-lysine biosynthesis via DAP pathway; DL-2,6-diaminopimelate from LL-2,6-diaminopimelate: step 1/1. Functionally, catalyzes the stereoinversion of LL-2,6-diaminopimelate (L,L-DAP) to meso-diaminopimelate (meso-DAP), a precursor of L-lysine and an essential component of the bacterial peptidoglycan. The polypeptide is Diaminopimelate epimerase (Brachyspira hyodysenteriae (strain ATCC 49526 / WA1)).